We begin with the raw amino-acid sequence, 543 residues long: Glutamyl-tRNA(Gln) amidotransferase subunit A, chloroplastic/mitochondrial (543 aa).

Active-site charge relay system residues include K123 and S198. Catalysis depends on S222, which acts as the Acyl-ester intermediate.

This sequence belongs to the amidase family. GatA subfamily. Subunit of the heterotrimeric GatCAB amidotransferase (AdT) complex, composed of A, B and C subunits.

It is found in the mitochondrion. It localises to the plastid. Its subcellular location is the chloroplast stroma. It catalyses the reaction L-glutamyl-tRNA(Gln) + L-glutamine + ATP + H2O = L-glutaminyl-tRNA(Gln) + L-glutamate + ADP + phosphate + H(+). Its function is as follows. Allows the formation of correctly charged Gln-tRNA(Gln) through the transamidation of misacylated Glu-tRNA(Gln) in chloroplasts and mitochondria. The reaction takes place in the presence of glutamine and ATP through an activated gamma-phospho-Glu-tRNA(Gln). This is Glutamyl-tRNA(Gln) amidotransferase subunit A, chloroplastic/mitochondrial from Oryza sativa subsp. japonica (Rice).